The sequence spans 427 residues: UDP-N-acetyl-D-mannosamine dehydrogenase (427 aa).

NAD(+) contacts are provided by Y20, I21, D40, R45, T92, and T130. The UDP-N-acetyl-alpha-D-mannosaminouronate site is built by R157, V158, K209, N213, R216, H247, R249, and G260. K209 acts as the Proton donor/acceptor in catalysis. C263 acts as the Nucleophile in catalysis. 2 residues coordinate UDP-N-acetyl-alpha-D-mannosaminouronate: Y317 and K318. R325 contributes to the NAD(+) binding site. K403 provides a ligand contact to UDP-N-acetyl-alpha-D-mannosaminouronate.

Belongs to the UDP-glucose/GDP-mannose dehydrogenase family. In terms of assembly, homotetramer; probably dimer of dimers.

The enzyme catalyses UDP-N-acetyl-alpha-D-mannosamine + 2 NAD(+) + H2O = UDP-N-acetyl-alpha-D-mannosaminouronate + 2 NADH + 3 H(+). Its function is as follows. Catalyzes the four-electron oxidation of UDP-N-acetyl-D-mannosamine (UDP-ManNAc), reducing NAD(+) and releasing UDP-N-acetylmannosaminuronic acid (UDP-ManNAcA). This is UDP-N-acetyl-D-mannosamine dehydrogenase (wecC) from Methanocaldococcus jannaschii (strain ATCC 43067 / DSM 2661 / JAL-1 / JCM 10045 / NBRC 100440) (Methanococcus jannaschii).